The primary structure comprises 214 residues: Probable nicotinate-nucleotide adenylyltransferase (214 aa).

This sequence belongs to the NadD family.

It carries out the reaction nicotinate beta-D-ribonucleotide + ATP + H(+) = deamido-NAD(+) + diphosphate. Its pathway is cofactor biosynthesis; NAD(+) biosynthesis; deamido-NAD(+) from nicotinate D-ribonucleotide: step 1/1. Catalyzes the reversible adenylation of nicotinate mononucleotide (NaMN) to nicotinic acid adenine dinucleotide (NaAD). This chain is Probable nicotinate-nucleotide adenylyltransferase, found in Mycobacterium bovis (strain ATCC BAA-935 / AF2122/97).